The primary structure comprises 397 residues: Acid extracellular protease (397 aa).

The N-terminal stretch at 1-17 (MQFSLATLTTLLAFVAA) is a signal peptide. In terms of domain architecture, Peptidase A1 spans 61–378 (YQVQISLGGQ…DLERDEVSIA (318 aa)). The active site involves Asp77. Asn88 carries an N-linked (GlcNAc...) asparagine glycan. The cysteines at positions 93 and 100 are disulfide-linked. Asp264 is a catalytic residue. Cysteines 303 and 343 form a disulfide. Asn310 and Asn314 each carry an N-linked (GlcNAc...) asparagine glycan.

This sequence belongs to the peptidase A1 family.

The protein localises to the secreted. The sequence is that of Acid extracellular protease (AXP1) from Yarrowia lipolytica (strain CLIB 122 / E 150) (Yeast).